Here is a 75-residue protein sequence, read N- to C-terminus: uncharacterized protein (75 aa).

Residues 44 to 64 traverse the membrane as a helical segment; that stretch reads IINMIVIWAALIALFVKLYIL.

Its subcellular location is the host membrane. This is an uncharacterized protein from Ostreid herpesvirus 1 (isolate France) (OsHV-1).